The sequence spans 421 residues: D-inositol 3-phosphate glycosyltransferase (421 aa).

His13 is a 1D-myo-inositol 3-phosphate binding site. Residues 19 to 20 (QP) and Gly27 each bind UDP-N-acetyl-alpha-D-glucosamine. Residues 24–29 (DAGGMN), Lys82, Tyr115, Thr139, and Arg159 contribute to the 1D-myo-inositol 3-phosphate site. UDP-N-acetyl-alpha-D-glucosamine-binding residues include Arg233, Lys238, and Val294. Residues Phe303, Arg304, and Ala306 each contribute to the Mg(2+) site. UDP-N-acetyl-alpha-D-glucosamine-binding residues include Glu316 and Glu324. Mg(2+) is bound at residue Thr330.

Belongs to the glycosyltransferase group 1 family. MshA subfamily. Homodimer.

It catalyses the reaction 1D-myo-inositol 3-phosphate + UDP-N-acetyl-alpha-D-glucosamine = 1D-myo-inositol 2-acetamido-2-deoxy-alpha-D-glucopyranoside 3-phosphate + UDP + H(+). Catalyzes the transfer of a N-acetyl-glucosamine moiety to 1D-myo-inositol 3-phosphate to produce 1D-myo-inositol 2-acetamido-2-deoxy-glucopyranoside 3-phosphate in the mycothiol biosynthesis pathway. The sequence is that of D-inositol 3-phosphate glycosyltransferase from Arthrobacter sp. (strain FB24).